The sequence spans 254 residues: Glucosamine-6-phosphate deaminase (254 aa).

Catalysis depends on D65, which acts as the Proton acceptor; for enolization step. N134 acts as the For ring-opening step in catalysis. H136 (proton acceptor; for ring-opening step) is an active-site residue. The active-site For ring-opening step is E141.

It belongs to the glucosamine/galactosamine-6-phosphate isomerase family. NagB subfamily.

The enzyme catalyses alpha-D-glucosamine 6-phosphate + H2O = beta-D-fructose 6-phosphate + NH4(+). The protein operates within amino-sugar metabolism; N-acetylneuraminate degradation; D-fructose 6-phosphate from N-acetylneuraminate: step 5/5. Its function is as follows. Catalyzes the reversible isomerization-deamination of glucosamine 6-phosphate (GlcN6P) to form fructose 6-phosphate (Fru6P) and ammonium ion. This Corynebacterium aurimucosum (strain ATCC 700975 / DSM 44827 / CIP 107346 / CN-1) (Corynebacterium nigricans) protein is Glucosamine-6-phosphate deaminase.